The sequence spans 947 residues: Protein translocase subunit SecA (947 aa).

Residues Gln87, 105-109, and Asp494 each bind ATP; that span reads GEGKT. The disordered stretch occupies residues 860-947; that stretch reads TAPKPLPTQE…NRAPKSKRKR (88 aa). The span at 870–885 shows a compositional bias: low complexity; that stretch reads AAARTTGTAAPTALRA. 2 stretches are compositionally biased toward basic and acidic residues: residues 903-914 and 922-931; these read EDGKAKATRDSA and ASRRERREAA.

It belongs to the SecA family. Monomer and homodimer. Part of the essential Sec protein translocation apparatus which comprises SecA, SecYEG and auxiliary proteins SecDF. Other proteins may also be involved.

The protein localises to the cell membrane. Its subcellular location is the cytoplasm. It carries out the reaction ATP + H2O + cellular proteinSide 1 = ADP + phosphate + cellular proteinSide 2.. In terms of biological role, part of the Sec protein translocase complex. Interacts with the SecYEG preprotein conducting channel. Has a central role in coupling the hydrolysis of ATP to the transfer of proteins into and across the cell membrane, serving as an ATP-driven molecular motor driving the stepwise translocation of polypeptide chains across the membrane. The protein is Protein translocase subunit SecA of Rhodococcus erythropolis (strain PR4 / NBRC 100887).